The chain runs to 501 residues: MEGDSNPLYEQRFNAAVKVIQNLPPNGSFQPSHDMMLKFYSYYKQATQGPCNIPRPGFWDPVGKAKWDAWSSLGEMPKEEAMAAYVDDLKLILESMPVSSEVEELLQVIGPFYELVDEKRKITQVSDLSTGFGNLLSSPPKCVTKSIIRTMEMNGNLEGYPIKTAETLKVKSIDLEDREDDDDEDEEGERDEVEEFKEVEKASQPKKRVSAGRPKGPVSNGSISQHKGLSNGTHGSKSDLNRQESEENTEHMNHDGGIVELNGHLNSEKDKEEDVSSSHHVASDSDSEVYCDSVDQFGGEDGSEIHMNRSLEVLEESHSTPSSTGDIRSQDDELLGREEGVQHGGEDGRGSRGGAQRRELPVKRSDSSVVRRGRGSRSPASGSGSAGPQQGSGGDGERWGADGPMTENLNEQIICALARLQDDMQSVLQRLHTLEALTASQARSLALPSDYLTTPANRNKKKPSWWPFDVSLGTVAFAVVWPFVVQWLIRVYVQRRRRRIN.

Residues 9–98 (YEQRFNAAVK…LKLILESMPV (90 aa)) enclose the ACB domain. An acyl-CoA contacts are provided by residues 20-29 (IQNLPPNGSF), 40-44 (YSYYK), Lys-66, and Tyr-85. Residues 173–405 (IDLEDREDDD…GERWGADGPM (233 aa)) are disordered. Residues 176 to 195 (EDREDDDDEDEEGERDEVEE) show a composition bias toward acidic residues. Over residues 219–235 (SNGSISQHKGLSNGTHG) the composition is skewed to polar residues. Basic and acidic residues-rich tracts occupy residues 236–254 (SKSDLNRQESEENTEHMNH), 266–283 (NSEKDKEEDVSSSHHVAS), and 328–366 (RSQDDELLGREEGVQHGGEDGRGSRGGAQRRELPVKRSD). The span at 376–389 (SRSPASGSGSAGPQ) shows a compositional bias: low complexity. Residues 406–437 (TENLNEQIICALARLQDDMQSVLQRLHTLEAL) adopt a coiled-coil conformation. Residues 465 to 485 (WWPFDVSLGTVAFAVVWPFVV) traverse the membrane as a helical segment.

It belongs to the ATG37 family.

The protein localises to the membrane. In terms of biological role, acyl-CoA binding protein which acts as the peroxisome receptor for pexophagy but is dispensable for aggrephagy and nonselective autophagy. Binds medium- and long-chain acyl-CoA esters. The chain is Acyl-CoA-binding domain-containing protein 5A (acbd5a) from Danio rerio (Zebrafish).